Here is a 113-residue protein sequence, read N- to C-terminus: Large ribosomal subunit protein uL22 (113 aa).

It belongs to the universal ribosomal protein uL22 family. As to quaternary structure, part of the 50S ribosomal subunit.

Functionally, this protein binds specifically to 23S rRNA; its binding is stimulated by other ribosomal proteins, e.g. L4, L17, and L20. It is important during the early stages of 50S assembly. It makes multiple contacts with different domains of the 23S rRNA in the assembled 50S subunit and ribosome. The globular domain of the protein is located near the polypeptide exit tunnel on the outside of the subunit, while an extended beta-hairpin is found that lines the wall of the exit tunnel in the center of the 70S ribosome. In Symbiobacterium thermophilum (strain DSM 24528 / JCM 14929 / IAM 14863 / T), this protein is Large ribosomal subunit protein uL22.